The sequence spans 185 residues: Ribosome-recycling factor (185 aa).

It belongs to the RRF family.

Its subcellular location is the cytoplasm. Its function is as follows. Responsible for the release of ribosomes from messenger RNA at the termination of protein biosynthesis. May increase the efficiency of translation by recycling ribosomes from one round of translation to another. This chain is Ribosome-recycling factor, found in Corynebacterium urealyticum (strain ATCC 43042 / DSM 7109).